A 29-amino-acid chain; its full sequence is Galanin (29 aa).

Ala-29 bears the Alanine amide mark.

This sequence belongs to the galanin family.

It localises to the secreted. Its function is as follows. Contracts smooth muscle of the gastrointestinal and genitourinary tract, regulates growth hormone release, modulates insulin release, and may be involved in the control of adrenal secretion. The chain is Galanin (GAL) from Ovis aries (Sheep).